The sequence spans 5068 residues: Protein piccolo (5068 aa).

The span at 1 to 20 (MGNEASLEGEGLPEGLAAAA) shows a compositional bias: low complexity. 2 disordered regions span residues 1 to 143 (MGNE…DFKE) and 173 to 524 (FDLI…QAPA). Residues 93-102 (PGKPPDPGRP) show a composition bias toward pro residues. 3 stretches are compositionally biased toward basic and acidic residues: residues 111-122 (RTTDTFRSEQKL), 133-143 (KESKSRTDFKE), and 185-199 (ETTK…DQGK). Ser-212 is modified (phosphoserine). Polar residues predominate over residues 232–241 (PSKSVSSQQA). Residues 252–279 (AKPSQQSPAQTPAQQAKPVAQQPGPAKA) are compositionally biased toward low complexity. The segment covering 319–334 (TSLQQPGPKSLAQTPG) has biased composition (polar residues). Pro residues-rich tracts occupy residues 391 to 407 (PTKP…PQPQ) and 416 to 487 (PQQP…PQPQ). The 10 X 10 AA tandem approximate repeats of P-A-K-P-Q-P-Q-Q-P-X stretch occupies residues 401-500 (PAKPQPQQPV…LGKPSAQQPS (100 aa)). Residues 495 to 508 (SAQQPSKSISQTVT) show a composition bias toward polar residues. Over residues 515–524 (PPTSAAQAPA) the composition is skewed to low complexity. The segment at 532–556 (CPLCNTTELLLHTPEKANFNTCTEC) adopts a C4-type zinc-finger fold. Disordered stretches follow at residues 594-867 (AAIP…TVTG), 883-1005 (LIST…TELN), 1057-1345 (LGDM…PSDL), and 1364-1803 (VGEK…SDPE). A compositionally biased stretch (polar residues) spans 610 to 625 (QPATASKSPVPSQQAS). Over residues 626 to 644 (PKKELPSKQDSPKAPESKK) the composition is skewed to basic and acidic residues. The segment covering 709-738 (SPSSAAATSKPAILSSQVQAQAQVTTAPPL) has biased composition (low complexity). Residues 782–795 (ESKDPVQKKEEPKK) are compositionally biased toward basic and acidic residues. The span at 809–830 (VPKGSPTPSGTRPTTGQATPQS) shows a compositional bias: low complexity. A phosphoserine mark is found at Ser-844 and Ser-856. Composition is skewed to polar residues over residues 856 to 865 (SQPTTPQETV) and 883 to 893 (LISTAGQQAPH). At Thr-860 the chain carries Phosphothreonine. A C4-type zinc finger spans residues 997 to 1020 (CPLCRTELNVGSQDPPNFNTCTEC). Residues 1073–1085 (SPVPAPAEPPPQK) show a composition bias toward pro residues. The segment covering 1097–1116 (KETEVKAETEKQIPEKETPS) has biased composition (basic and acidic residues). Thr-1120 carries the phosphothreonine modification. Composition is skewed to basic and acidic residues over residues 1144-1165 (PEKK…KKPP), 1172-1186 (LEEK…KLPP), 1244-1253 (PKDRQKESRD), and 1262-1283 (TAKE…DKSD). A compositionally biased stretch (polar residues) spans 1290-1306 (PKSPQGLSDTGYSSDGI). Phosphoserine is present on residues Ser-1292, Ser-1302, Ser-1303, Ser-1332, Ser-1334, Ser-1337, Ser-1338, and Ser-1341. Positions 1319–1333 (SDEKDLLKGLKKDSF) are enriched in basic and acidic residues. Over residues 1334–1343 (SQESSPSSPS) the composition is skewed to low complexity. The span at 1374–1392 (PQKVSPEQPQDQQKTQTPS) shows a compositional bias: polar residues. Residues 1405–1444 (KESQEKKVTSKKDSAQGFPSRKEHKENPELVDDLSPRRAS) are compositionally biased toward basic and acidic residues. A phosphoserine mark is found at Ser-1439, Ser-1451, Ser-1452, Ser-1454, Ser-1457, Ser-1481, Ser-1484, Ser-1505, and Ser-1507. A compositionally biased stretch (acidic residues) spans 1499 to 1511 (SADEDASGSEDEE). A Phosphothreonine modification is found at Thr-1552. Phosphoserine occurs at positions 1553, 1563, and 1575. Positions 1566 to 1575 (DEDDETFDES) are enriched in acidic residues. Basic and acidic residues predominate over residues 1576–1587 (PELKFRETKSQE). The segment covering 1606–1624 (ELNSTVTDKYSAESSQKKT) has biased composition (polar residues). The span at 1628 to 1638 (FDEEPELEMES) shows a compositional bias: acidic residues. Ser-1638 bears the Phosphoserine mark. Residue Thr-1640 is modified to Phosphothreonine. Residues Ser-1642 and Ser-1647 each carry the phosphoserine modification. Positions 1650–1667 (EGSSSLHASSFTPGTSPT) are enriched in polar residues. Positions 1707–1720 (DSSEEEELREEEEL) are enriched in acidic residues. Residues Ser-1708 and Ser-1709 each carry the phosphoserine modification. Residues 1721 to 1734 (LKEQEKQRELEQQQ) show a composition bias toward basic and acidic residues. A Phosphothreonine modification is found at Thr-1760. Ser-1766 is modified (phosphoserine). Residues 1775-1790 (EELRQAAEMEELHRSS) show a composition bias toward basic and acidic residues. Phosphoserine occurs at positions 1795, 1800, 1808, and 1829. Disordered stretches follow at residues 2104–2126 (PSES…ISSV) and 2261–2377 (EAEL…AAAA). Over residues 2109-2126 (TSVPPSDTPSLTSSISSV) the composition is skewed to low complexity. Residues 2277 to 2291 (TPSSQTKEQPGSPHS) are compositionally biased toward polar residues. A compositionally biased stretch (pro residues) spans 2334-2368 (QPPPPPPPPPPPPPPPPPPPPPPLPPATSPKPPTY). At Ser-2495 the chain carries Phosphoserine. An O-linked (GlcNAc) threonine glycan is attached at Thr-2686. O-linked (GlcNAc) serine glycosylation occurs at Ser-2960. Thr-2998 carries the phosphothreonine modification. Disordered regions lie at residues 3334-3443 (KEEK…SKVS) and 3490-3556 (KGGS…LYSP). Ser-3358 bears the Phosphoserine mark. The span at 3361-3370 (DDPRNLKKIV) shows a compositional bias: basic and acidic residues. Position 3372 is a phosphoserine (Ser-3372). Phosphothreonine occurs at positions 3376 and 3403. Residues 3403-3412 (TDDEDQDEWD) are compositionally biased toward acidic residues. Residues 3495–3507 (GCQTETDPDTQSP) show a composition bias toward polar residues. A phosphoserine mark is found at Ser-3506, Ser-3514, Ser-3545, Ser-3549, Ser-3555, Ser-3558, Ser-3561, Ser-3582, Ser-3608, Ser-3610, and Ser-3616. Disordered regions lie at residues 3576–3679 (PLPD…RRRM) and 3760–3797 (DYMS…QFIP). Composition is skewed to polar residues over residues 3636–3645 (KGSQTTSGTQ) and 3661–3673 (STGT…TMGT). Ser-3763 carries the phosphoserine modification. Positions 3773–3785 (SRVESQHGIERPR) are enriched in basic and acidic residues. A compositionally biased stretch (polar residues) spans 3787-3797 (APQTEFSQFIP). Residues Ser-4016, Ser-4042, and Ser-4132 each carry the phosphoserine modification. Disordered stretches follow at residues 4207–4231 (ADKP…GLDL) and 4254–4273 (VSFG…LPIS). Positions 4210–4231 (PYSSGSRSRPSSRPSSVYGLDL) are enriched in low complexity. Positions 4257 to 4273 (GHSSSSARTKPTSLPIS) are enriched in polar residues. 5 positions are modified to phosphoserine: Ser-4286, Ser-4290, Ser-4293, Ser-4322, and Ser-4358. The tract at residues 4317-4339 (RDQFGSSHSLPEVQQHMREESRT) is disordered. One can recognise a PDZ domain in the interval 4424–4518 (RIKITRDSKD…EAEICVRLDL (95 aa)). A disordered region spans residues 4574-4620 (KGAHAHSGPTSAGSSSVPSPGQPGSPSVSKKKHGGSKPTDVSKTASH). The segment covering 4578–4601 (AHSGPTSAGSSSVPSPGQPGSPSV) has biased composition (low complexity). Ser-4592 is modified (phosphoserine). The 130-residue stretch at 4622 to 4751 (ITGEIQLQIN…SHLDNTPRWY (130 aa)) folds into the C2 1 domain. Ca(2+) contacts are provided by Asp-4651 and Asp-4657. Ser-4706 carries the post-translational modification Phosphoserine. The Ca(2+) site is built by Asp-4721, Asp-4723, Ser-4726, and Asp-4729. Disordered regions lie at residues 4758–4834 (ESIE…SVAQ) and 4857–4891 (QPTK…SEGS). 2 stretches are compositionally biased toward low complexity: residues 4766–4778 (HSSQ…PKPS) and 4805–4815 (SSPGSSKSSSE). The segment covering 4823-4834 (PSRSQSKTSVAQ) has biased composition (polar residues). The span at 4870-4891 (SVSTGSSGSSVGSGYSVDSEGS) shows a compositional bias: low complexity. The C2 2 domain occupies 4933 to 5058 (VMGEIKLALK…DLRKRIVNWH (126 aa)).

In terms of assembly, interacts with BSN, ERC2/CAST1, RIMS1 and UNC13A. Interacts (via C-terminus) with TRIO (via N-terminus). Interacts with CTBP1. Interacts with SIAH1; this interaction negatively regulates SIAH1 E3 ligase activity. Directly interacts with GIT1 and GIT2. It depends on Ca(2+) as a cofactor. In terms of tissue distribution, highly expressed in brain. Moderately expressed in pituitary gland and pancreatic islets. Low levels found in stomach.

The protein resides in the presynaptic active zone. In terms of biological role, scaffold protein of the presynaptic cytomatrix at the active zone (CAZ) which is the place in the synapse where neurotransmitter is released. After synthesis, participates in the formation of Golgi-derived membranous organelles termed Piccolo-Bassoon transport vesicles (PTVs) that are transported along axons to sites of nascent synaptic contacts. At the presynaptic active zone, regulates the spatial organization of synaptic vesicle cluster, the protein complexes that execute membrane fusion and compensatory endocytosis. Organizes as well the readily releasable pool of synaptic vesicles and safeguards a fraction of them to be not immediately available for action potential-induced release. Also functions in processes other than assembly such as the regulation of specific presynaptic protein ubiquitination by interacting with SIAH1 or the regulation of presynaptic autophagy. Also mediates synapse to nucleus communication leading to reconfiguration of gene expression by associating with the transcriptional corepressor CTBP1 and by subsequently reducing the size of its pool available for nuclear import. In Mus musculus (Mouse), this protein is Protein piccolo.